The chain runs to 620 residues: Chaperone protein HscA homolog (620 aa).

It belongs to the heat shock protein 70 family.

Chaperone involved in the maturation of iron-sulfur cluster-containing proteins. Has a low intrinsic ATPase activity which is markedly stimulated by HscB. This is Chaperone protein HscA homolog from Herminiimonas arsenicoxydans.